Here is a 439-residue protein sequence, read N- to C-terminus: Tol-Pal system protein TolB (439 aa).

A signal peptide spans 1–22 (MTKFPRWLAMLVGLLFPLSALT).

Belongs to the TolB family. The Tol-Pal system is composed of five core proteins: the inner membrane proteins TolA, TolQ and TolR, the periplasmic protein TolB and the outer membrane protein Pal. They form a network linking the inner and outer membranes and the peptidoglycan layer.

The protein resides in the periplasm. Its function is as follows. Part of the Tol-Pal system, which plays a role in outer membrane invagination during cell division and is important for maintaining outer membrane integrity. This chain is Tol-Pal system protein TolB, found in Xylella fastidiosa (strain 9a5c).